A 305-amino-acid chain; its full sequence is Axin interactor, dorsalization-associated protein A (305 aa).

The segment at G153–N220 is axin-binding. A C2 Aida-type domain is found at L156–L303.

The protein belongs to the AIDA family.

Its function is as follows. Acts as a ventralizing factor during embryogenesis. Inhibits axin-mediated JNK activation by binding axin and disrupting axin homodimerization. This in turn antagonizes a Wnt/beta-catenin-independent dorsalization pathway activated by axin/JNK-signaling. The protein is Axin interactor, dorsalization-associated protein A (aida-a) of Xenopus laevis (African clawed frog).